The following is a 155-amino-acid chain: Ribonuclease HI (155 aa).

The region spanning 1–142 (MTKQVEIFTD…CDELARAAAE (142 aa)) is the RNase H type-1 domain. Mg(2+)-binding residues include Asp10, Glu48, Asp70, and Asp134.

It belongs to the RNase H family. Monomer. Requires Mg(2+) as cofactor.

It localises to the cytoplasm. It catalyses the reaction Endonucleolytic cleavage to 5'-phosphomonoester.. In terms of biological role, endonuclease that specifically degrades the RNA of RNA-DNA hybrids. This is Ribonuclease HI from Vibrio vulnificus (strain CMCP6).